We begin with the raw amino-acid sequence, 297 residues long: MGNQLDRITHLNYSELPTGDPSGIEKDELRVGVAYFFSDEEEDLDERGQPDKFGVKAPPGCAPCPESPSRHHHHHHHHHLLHQLVLNETQFSAFRGQECIFSKVSGGPQGADLSVYAVTALPALCEPGDLLELLWLQPAPEPPAPAPHWAVYVGGGQIIHLCQGEIRQDSLYEAGAANVGRVVNSWYRYRPLVAELVVQNACGHLGLKSEEICWTNSESFAAWCRFGKREFKAGGEVPAGTQPPQQQYYLKVHLADNKVHTARFHSLEDLIREKRRIDASGRLRVLQELADLVDDKE.

Ser-38 carries the post-translational modification Phosphoserine. The LRAT domain occupies Pro-138–Ala-233.

The protein belongs to the LRATD family.

It is found in the cytoplasm. Functionally, may play a role in cell morphology and motility. In Bos taurus (Bovine), this protein is Protein LRATD1 (LRATD1).